A 236-amino-acid polypeptide reads, in one-letter code: Large ribosomal subunit protein uL2 (236 aa).

Over residues 1–10 (MGHRITTQSR) the composition is skewed to polar residues. Disordered stretches follow at residues 1–20 (MGHR…YRAP) and 202–236 (GGGG…TGRR). The segment covering 224-236 (KVGHIAARRTGRR) has biased composition (basic residues).

This sequence belongs to the universal ribosomal protein uL2 family. Part of the 50S ribosomal subunit. Forms a bridge to the 30S subunit in the 70S ribosome.

Its function is as follows. One of the primary rRNA binding proteins. Required for association of the 30S and 50S subunits to form the 70S ribosome, for tRNA binding and peptide bond formation. It has been suggested to have peptidyltransferase activity; this is somewhat controversial. Makes several contacts with the 16S rRNA in the 70S ribosome. This is Large ribosomal subunit protein uL2 from Methanospirillum hungatei JF-1 (strain ATCC 27890 / DSM 864 / NBRC 100397 / JF-1).